The sequence spans 188 residues: Putative pre-16S rRNA nuclease (188 aa).

Residues His-144–Gly-188 form a disordered region. Positions Lys-154–Gly-163 are enriched in basic residues.

This sequence belongs to the YqgF nuclease family.

The protein resides in the cytoplasm. Could be a nuclease involved in processing of the 5'-end of pre-16S rRNA. This chain is Putative pre-16S rRNA nuclease, found in Kineococcus radiotolerans (strain ATCC BAA-149 / DSM 14245 / SRS30216).